The following is a 241-amino-acid chain: Triosephosphate isomerase (241 aa).

Substrate is bound at residue 9-11 (NWK). Residue histidine 88 is the Electrophile of the active site. Glutamate 158 functions as the Proton acceptor in the catalytic mechanism. Residues glycine 164, serine 203, and 224-225 (GG) contribute to the substrate site.

The protein belongs to the triosephosphate isomerase family. As to quaternary structure, homodimer.

It is found in the cytoplasm. It carries out the reaction D-glyceraldehyde 3-phosphate = dihydroxyacetone phosphate. The protein operates within carbohydrate biosynthesis; gluconeogenesis. Its pathway is carbohydrate degradation; glycolysis; D-glyceraldehyde 3-phosphate from glycerone phosphate: step 1/1. Its function is as follows. Involved in the gluconeogenesis. Catalyzes stereospecifically the conversion of dihydroxyacetone phosphate (DHAP) to D-glyceraldehyde-3-phosphate (G3P). This chain is Triosephosphate isomerase, found in Dichelobacter nodosus (strain VCS1703A).